The chain runs to 2209 residues: Genome polyprotein (2209 aa).

G2 carries N-myristoyl glycine; by host lipidation. The Cytoplasmic segment spans residues 2–1520; the sequence is GAQVSSQKVG…NINRAMTILQ (1519 aa). The interval 580-600 is amphipathic alpha-helix; it reads GLGQMLESMIDNTVRETVGAA. Residues H901 and D919 each act as for protease 2A activity in the active site. 2 residues coordinate Zn(2+): C936 and C938. C990 serves as the catalytic For protease 2A activity. The Zn(2+) site is built by C996 and H998. The tract at residues 1128-1200 is membrane-binding; sequence GDSWLKKFTE…HQSCPSQEHQ (73 aa). Residues 1128 to 1266 form an oligomerization region; the sequence is GDSWLKKFTE…SPGTGKSVAT (139 aa). Residues 1149-1153 are RNA-binding; that stretch reads SNKIS. The SF3 helicase domain maps to 1232–1388; that stretch reads EHTINNYIQF…NEYSRDGKLN (157 aa). 1256-1263 contacts ATP; it reads GSPGTGKS. The Zn(2+) site is built by C1396, C1399, C1408, and C1413. The C4-type zinc finger occupies 1396–1413; it reads CKNCHQPANFKRCCPLVC. The segment at 1440 to 1447 is RNA-binding; the sequence is ERNRRSNI. Residues 1451–1456 are oligomerization; it reads MEALFQ. Residues 1521–1536 lie within the membrane without spanning it; it reads AVTTFAAVAGVVYVMY. The Cytoplasmic portion of the chain corresponds to 1537 to 2209; sequence KLFAGHQGAY…TLYRRWLDSF (673 aa). At Y1546 the chain carries O-(5'-phospho-RNA)-tyrosine. The Peptidase C3 domain occupies 1566-1744; sequence GPGFDYAVAM…FAAALKRSYF (179 aa). Residues H1605, E1636, and C1712 each act as for protease 3C activity in the active site. The RdRp catalytic domain occupies 1975–2090; the sequence is EKLFAFDYTG…SYPHEVDASL (116 aa). Mg(2+) contacts are provided by D1981 and D2076.

It belongs to the picornaviruses polyprotein family. In terms of assembly, interacts with capsid protein VP1 and capsid protein VP3 to form heterotrimeric protomers. As to quaternary structure, interacts with capsid protein VP0, and capsid protein VP3 to form heterotrimeric protomers. Interacts with human PVR. Five protomers subsequently associate to form pentamers which serve as building blocks for the capsid. Interacts with capsid protein VP2, capsid protein VP3 and capsid protein VP4 following cleavage of capsid protein VP0. Interacts with capsid protein VP1 and capsid protein VP3 in the mature capsid. In terms of assembly, interacts with capsid protein VP0 and capsid protein VP1 to form heterotrimeric protomers. Five protomers subsequently associate to form pentamers which serve as building blocks for the capsid. Interacts with capsid protein VP4 in the mature capsid. Interacts with protein 2C; this interaction may be important for virion morphogenesis. As to quaternary structure, interacts with capsid protein VP1 and capsid protein VP3. Homodimer. In terms of assembly, homohexamer; forms a hexameric ring structure with 6-fold symmetry characteristic of AAA+ ATPases. Interacts (via N-terminus) with host RTN3 (via reticulon domain); this interaction is important for viral replication. Interacts with capsid protein VP3; this interaction may be important for virion morphogenesis. As to quaternary structure, interacts with protein 3CD. Homodimer. Interacts with host GBF1. Interacts (via GOLD domain) with host ACBD3 (via GOLD domain); this interaction allows the formation of a viral protein 3A/ACBD3 heterotetramer with a 2:2 stoichiometry, which will stimulate the recruitment of host PI4KB in order to synthesize PI4P at the viral RNA replication sites. In terms of assembly, interacts with RNA-directed RNA polymerase. As to quaternary structure, interacts with protein 3AB and with RNA-directed RNA polymerase. Interacts with Viral protein genome-linked and with protein 3CD. Mg(2+) serves as cofactor. Post-translationally, specific enzymatic cleavages in vivo by the viral proteases yield processing intermediates and the mature proteins. In terms of processing, myristoylation is required for the formation of pentamers during virus assembly. Further assembly of 12 pentamers and a molecule of genomic RNA generates the provirion. During virion maturation, immature virions are rendered infectious following cleavage of VP0 into VP4 and VP2. This maturation seems to be an autocatalytic event triggered by the presence of RNA in the capsid and it is followed by a conformational change infectious virion. Post-translationally, myristoylation is required during RNA encapsidation and formation of the mature virus particle. In terms of processing, VPg is uridylylated by the polymerase into VPg-pUpU. This acts as a nucleotide-peptide primer for the genomic RNA replication.

Its subcellular location is the virion. The protein localises to the host cytoplasm. The protein resides in the host cytoplasmic vesicle membrane. It localises to the host nucleus. The catalysed reaction is a ribonucleoside 5'-triphosphate + H2O = a ribonucleoside 5'-diphosphate + phosphate + H(+). The enzyme catalyses Selective cleavage of Tyr-|-Gly bond in the picornavirus polyprotein.. It catalyses the reaction RNA(n) + a ribonucleoside 5'-triphosphate = RNA(n+1) + diphosphate. It carries out the reaction Selective cleavage of Gln-|-Gly bond in the poliovirus polyprotein. In other picornavirus reactions Glu may be substituted for Gln, and Ser or Thr for Gly.. Its activity is regulated as follows. Replication or transcription is subject to high level of random mutations by the nucleotide analog ribavirin. Its function is as follows. Forms an icosahedral capsid of pseudo T=3 symmetry with capsid proteins VP2 and VP3. The capsid is 300 Angstroms in diameter, composed of 60 copies of each capsid protein and enclosing the viral positive strand RNA genome. Capsid protein VP1 mainly forms the vertices of the capsid. Capsid protein VP1 interacts with host cell receptor PVR to provide virion attachment to target host cells. This attachment induces virion internalization predominantly through clathrin- and caveolin-independent endocytosis in Hela cells and through caveolin-mediated endocytosis in brain microvascular endothelial cells. Tyrosine kinases are probably involved in the entry process. Virus binding to PVR induces increased junctional permeability and rearrangement of junctional proteins. Modulation of endothelial tight junctions, as well as cytolytic infection of endothelial cells themselves, may result in loss of endothelial integrity which may help the virus to reach the CNS. After binding to its receptor, the capsid undergoes conformational changes. Capsid protein VP1 N-terminus (that contains an amphipathic alpha-helix) and capsid protein VP4 are externalized. Together, they shape a pore in the host membrane through which viral genome is translocated to host cell cytoplasm. In terms of biological role, forms an icosahedral capsid of pseudo T=3 symmetry with capsid proteins VP2 and VP3. The capsid is 300 Angstroms in diameter, composed of 60 copies of each capsid protein and enclosing the viral positive strand RNA genome. Lies on the inner surface of the capsid shell. After binding to the host receptor, the capsid undergoes conformational changes. Capsid protein VP4 is released, Capsid protein VP1 N-terminus is externalized, and together, they shape a pore in the host membrane through which the viral genome is translocated into the host cell cytoplasm. Functionally, component of immature procapsids, which is cleaved into capsid proteins VP4 and VP2 after maturation. Allows the capsid to remain inactive before the maturation step. Its function is as follows. Cysteine protease that cleaves viral polyprotein and specific host proteins. It is responsible for the autocatalytic cleavage between the P1 and P2 regions, which is the first cleavage occurring in the polyprotein. Also cleaves the host translation initiation factor EIF4G1, in order to shut down the capped cellular mRNA translation. Inhibits the host nucleus-cytoplasm protein and RNA trafficking by cleaving host members of the nuclear pores including NUP98, NUP62 and NUP153. Counteracts stress granule formation probably by antagonizing its assembly or promoting its dissassembly. Cleaves and inhibits host IFIH1/MDA5, thereby inhibiting the type-I IFN production and the establishment of the antiviral state. Cleaves and inhibits host MAVS, thereby inhibiting the type-I IFN production and the establishment of the antiviral state. In terms of biological role, plays an essential role in the virus replication cycle by acting as a viroporin. Creates a pore in the host endoplasmic reticulum and as a consequence releases Ca2+ in the cytoplasm of infected cell. In turn, high levels of cytoplasmic calcium may trigger membrane trafficking and transport of viral ER-associated proteins to viroplasms, sites of viral genome replication. Induces and associates with structural rearrangements of intracellular membranes. Displays RNA-binding, nucleotide binding and NTPase activities. May play a role in virion morphogenesis and viral RNA encapsidation by interacting with the capsid protein VP3. Functionally, localizes the viral replication complex to the surface of membranous vesicles. Together with protein 3CD binds the Cis-Active RNA Element (CRE) which is involved in RNA synthesis initiation. Acts as a cofactor to stimulate the activity of 3D polymerase, maybe through a nucleid acid chaperone activity. Its function is as follows. Localizes the viral replication complex to the surface of membranous vesicles. It inhibits host cell endoplasmic reticulum-to-Golgi apparatus transport and causes the disassembly of the Golgi complex, possibly through GBF1 interaction. This would result in depletion of MHC, trail receptors and IFN receptors at the host cell surface. Plays an essential role in viral RNA replication by recruiting ACBD3 and PI4KB at the viral replication sites, thereby allowing the formation of the rearranged membranous structures where viral replication takes place. In terms of biological role, acts as a primer for viral RNA replication and remains covalently bound to viral genomic RNA. VPg is uridylylated prior to priming replication into VPg-pUpU. The oriI viral genomic sequence may act as a template for this. The VPg-pUpU is then used as primer on the genomic RNA poly(A) by the RNA-dependent RNA polymerase to replicate the viral genome. During genome replication, the VPg-RNA linkage is removed by the host TDP2, thereby accelerating replication. During the late stage of the replication cycle, host TDP2 is excluded from sites of viral RNA synthesis and encapsidation, allowing for the generation of progeny virions. Involved in the viral replication complex and viral polypeptide maturation. It exhibits protease activity with a specificity and catalytic efficiency that is different from protease 3C. Protein 3CD lacks polymerase activity. Protein 3CD binds to the 5'UTR of the viral genome. Functionally, major viral protease that mediates proteolytic processing of the polyprotein. Cleaves host EIF5B, contributing to host translation shutoff. Also cleaves host PABPC1, contributing to host translation shutoff. Cleaves host RIGI and thus contributes to the inhibition of type I interferon production. Cleaves host NLRP1, triggers host N-glycine-mediated degradation of the autoinhibitory NLRP1 N-terminal fragment. Inhibits the integrated stress response (ISR) in the infected cell by cleaving host G3BP1. Stress granule formation is thus inhibited, which allows protein synthesis and viral replication. Its function is as follows. Replicates the viral genomic RNA on the surface of intracellular membranes. May form linear arrays of subunits that propagate along a strong head-to-tail interaction called interface-I. Covalently attaches UMP to a tyrosine of VPg, which is used to prime RNA synthesis. The positive stranded RNA genome is first replicated at virus induced membranous vesicles, creating a dsRNA genomic replication form. This dsRNA is then used as template to synthesize positive stranded RNA genomes. ss(+)RNA genomes are either translated, replicated or encapsidated. The polypeptide is Genome polyprotein (Homo sapiens (Human)).